We begin with the raw amino-acid sequence, 331 residues long: Retinol dehydrogenase 13 (331 aa).

Position 2 is an N-acetylserine (Ser2). Residue 45 to 51 participates in NADP(+) binding; sequence GANTGIG. Residue Ser174 coordinates substrate. The active-site Proton acceptor is Tyr200. Ser323 bears the Phosphoserine mark.

Belongs to the short-chain dehydrogenases/reductases (SDR) family. As to expression, widely expressed. In the retina, detected in the inner segment of the photoreceptor cells. Weak signals are observed in a small population of inner nuclear neurons and the inner plexiform layer.

It is found in the mitochondrion inner membrane. It carries out the reaction all-trans-retinol + NADP(+) = all-trans-retinal + NADPH + H(+). It functions in the pathway cofactor metabolism; retinol metabolism. Functionally, retinol dehydrogenase with a clear preference for NADP. Oxidizes all-trans-retinol, but seems to reduce all-trans-retinal with much higher efficiency. Has no activity toward steroids. In Homo sapiens (Human), this protein is Retinol dehydrogenase 13 (RDH13).